The sequence spans 242 residues: MANPDTIFSTPIDKIGDFTFDERVAEVFPDMIQRSIPGYSNIISAIGMLAERYAKPHSNVYDLGCSLGAATLSMRRSIDQEGCQIIGVDNSSAMVERCRLLINAYRSDTPVTILEADIRDVDIQDASVVVLNFTLQFLAPADRHALLEKIYAGLRPGGILILSEKYIFEDENANELLIDLHHDFKRANGYSELEISQKRSAIENVMLPDTIDVHKKRFNEIGFKSSEVWFQCFNFGSMFAIK.

S-adenosyl-L-methionine-binding positions include Y39, 64–66 (GCS), 89–90 (DN), 117–118 (DI), N132, and R199.

The protein belongs to the class I-like SAM-binding methyltransferase superfamily. Cx-SAM synthase family. In terms of assembly, homodimer.

The enzyme catalyses prephenate + S-adenosyl-L-methionine = carboxy-S-adenosyl-L-methionine + 3-phenylpyruvate + H2O. Functionally, catalyzes the conversion of S-adenosyl-L-methionine (SAM) to carboxy-S-adenosyl-L-methionine (Cx-SAM). This is Carboxy-S-adenosyl-L-methionine synthase from Aliivibrio fischeri (strain ATCC 700601 / ES114) (Vibrio fischeri).